The following is a 347-amino-acid chain: NADH-ubiquinone oxidoreductase chain 2 (347 aa).

The next 10 membrane-spanning stretches (helical) occupy residues 3–23 (PIIY…VMIS), 25–45 (HWLL…PVLM), 59–79 (YFLT…INLL), 89–109 (MFNP…LGLS), 149–169 (INPN…GWGG), 178–198 (IMAY…PYNT), 200–220 (MTIL…MLLI), 237–257 (MPVI…LPPL), 274–294 (ESII…YFYM), and 325–345 (LLPT…ALSS).

The protein belongs to the complex I subunit 2 family. Core subunit of respiratory chain NADH dehydrogenase (Complex I) which is composed of 45 different subunits. Interacts with TMEM242.

The protein resides in the mitochondrion inner membrane. It catalyses the reaction a ubiquinone + NADH + 5 H(+)(in) = a ubiquinol + NAD(+) + 4 H(+)(out). Functionally, core subunit of the mitochondrial membrane respiratory chain NADH dehydrogenase (Complex I) which catalyzes electron transfer from NADH through the respiratory chain, using ubiquinone as an electron acceptor. Essential for the catalytic activity and assembly of complex I. The protein is NADH-ubiquinone oxidoreductase chain 2 of Sus scrofa (Pig).